The sequence spans 468 residues: ATP synthase subunit beta (468 aa).

155–162 contacts ATP; that stretch reads GGAGVGKT.

This sequence belongs to the ATPase alpha/beta chains family. In terms of assembly, F-type ATPases have 2 components, CF(1) - the catalytic core - and CF(0) - the membrane proton channel. CF(1) has five subunits: alpha(3), beta(3), gamma(1), delta(1), epsilon(1). CF(0) has three main subunits: a(1), b(2) and c(9-12). The alpha and beta chains form an alternating ring which encloses part of the gamma chain. CF(1) is attached to CF(0) by a central stalk formed by the gamma and epsilon chains, while a peripheral stalk is formed by the delta and b chains.

It localises to the cell membrane. It carries out the reaction ATP + H2O + 4 H(+)(in) = ADP + phosphate + 5 H(+)(out). In terms of biological role, produces ATP from ADP in the presence of a proton gradient across the membrane. The catalytic sites are hosted primarily by the beta subunits. The chain is ATP synthase subunit beta from Streptococcus pyogenes serotype M5 (strain Manfredo).